The following is a 145-amino-acid chain: MVMSPGSLLLVFLLSLDVIPPTLAQDNYRYIKFLTQHYDAKPTGRDYRYCESMMKKRKLTSPCKEVNTFIHDTKNNIKAICGENGRPYGVNFRISNSRFQVTTCTHKGGSPRPPCQYNAFKDFRYIVIACEDGWPVHFDESFISP.

A signal peptide spans 1-24 (MVMSPGSLLLVFLLSLDVIPPTLA). Glutamine 25 carries the pyrrolidone carboxylic acid modification. Histidine 37 serves as the catalytic Proton acceptor. 3 disulfides stabilise this stretch: cysteine 50–cysteine 104, cysteine 63–cysteine 115, and cysteine 81–cysteine 130. Residues 55–59 (KKRKL) carry the Nucleolar localization signal motif. 2 residues coordinate Zn(2+): glutamate 65 and histidine 106. Catalysis depends on histidine 137, which acts as the Proton donor.

Belongs to the pancreatic ribonuclease family.

It is found in the cytoplasmic vesicle. Its subcellular location is the secretory vesicle lumen. The protein resides in the secreted. It localises to the nucleus. The protein localises to the nucleolus. Its activity is regulated as follows. Divalent metal ions, such as Cu2+ and Zn2+, may inhibit the ribonucleolytic activity. In terms of biological role, has low ribonuclease activity (in vitro). The chain is Angiogenin-3 (Ang3) from Mus musculus (Mouse).